A 129-amino-acid polypeptide reads, in one-letter code: Small ribosomal subunit protein uS12 (129 aa).

Position 89 is a 3-methylthioaspartic acid (D89).

The protein belongs to the universal ribosomal protein uS12 family. In terms of assembly, part of the 30S ribosomal subunit. Contacts proteins S8 and S17. May interact with IF1 in the 30S initiation complex.

Its function is as follows. With S4 and S5 plays an important role in translational accuracy. Interacts with and stabilizes bases of the 16S rRNA that are involved in tRNA selection in the A site and with the mRNA backbone. Located at the interface of the 30S and 50S subunits, it traverses the body of the 30S subunit contacting proteins on the other side and probably holding the rRNA structure together. The combined cluster of proteins S8, S12 and S17 appears to hold together the shoulder and platform of the 30S subunit. This is Small ribosomal subunit protein uS12 from Helicobacter hepaticus (strain ATCC 51449 / 3B1).